The following is a 172-amino-acid chain: Adenylate kinase isoenzyme 6 (172 aa).

Residues Gly13, Gly15, Lys16, Thr17, and Thr18 each contribute to the ATP site. Residues 33 to 56 (NVGDLAREEQLYDGYDEEYDCPIL) are NMP. The tract at residues 33-56 (NVGDLAREEQLYDGYDEEYDCPIL) is NMPbind. The segment at 108-118 (TRGYNEKKLTD) is LID. ATP is bound by residues Arg109 and Lys148.

This sequence belongs to the adenylate kinase family. AK6 subfamily. In terms of assembly, monomer and homodimer. Interacts with small ribosomal subunit protein uS11. Not a structural component of 43S pre-ribosomes, but transiently interacts with them by binding to uS11. Interacts with COIL (via C-terminus). As to expression, expressed in heart, brain, placenta, lung, liver, skeletal muscle, kidney, pancreas, chorionic villi and the central nervous system.

It localises to the cytoplasm. The protein resides in the nucleus. Its subcellular location is the nucleoplasm. The protein localises to the cajal body. The enzyme catalyses AMP + ATP = 2 ADP. It carries out the reaction ATP + H2O = ADP + phosphate + H(+). Broad-specificity nucleoside monophosphate (NMP) kinase that catalyzes the reversible transfer of the terminal phosphate group between nucleoside triphosphates and monophosphates. Also has ATPase activity. Involved in the late cytoplasmic maturation steps of the 40S ribosomal particles, specifically 18S rRNA maturation. While NMP activity is not required for ribosome maturation, ATPase activity is. Associates transiently with small ribosomal subunit protein uS11. ATP hydrolysis breaks the interaction with uS11. May temporarily remove uS11 from the ribosome to enable a conformational change of the ribosomal RNA that is needed for the final maturation step of the small ribosomal subunit. Its NMP activity may have a role in nuclear energy homeostasis. AMP and dAMP are the preferred substrates, but CMP and dCMP are also good substrates. IMP is phosphorylated to a much lesser extent. All nucleoside triphosphates ATP, GTP, UTP, CTP, dATP, dCTP, dGTP, and TTP are accepted as phosphate donors. CTP is the best phosphate donor, followed by UTP, ATP, GTP and dCTP. May be involved in regulation of Cajal body (CB) formation. The polypeptide is Adenylate kinase isoenzyme 6 (Homo sapiens (Human)).